We begin with the raw amino-acid sequence, 633 residues long: Laccase ARB_05828 (633 aa).

The first 16 residues, Met1–Ala16, serve as a signal peptide directing secretion. The propeptide occupies Gly22–Arg47. The N-linked (GlcNAc...) asparagine glycan is linked to Asn143. Cu cation contacts are provided by His148, His150, His192, and His194. A disulfide bridge connects residues Cys169 and Cys607. Residues Leu224–Ala353 form the Plastocyanin-like domain. N-linked (GlcNAc...) asparagine glycosylation is found at Asn286 and Asn456. Cu cation-binding residues include His508, His511, His513, His568, Cys569, His570, and His574.

It belongs to the multicopper oxidase family. In terms of assembly, monomer. Requires Cu cation as cofactor.

The protein localises to the secreted. It carries out the reaction 4 hydroquinone + O2 = 4 benzosemiquinone + 2 H2O. The polypeptide is Laccase ARB_05828 (Arthroderma benhamiae (strain ATCC MYA-4681 / CBS 112371) (Trichophyton mentagrophytes)).